The following is a 70-amino-acid chain: U2-agatoxin-Ao1j (70 aa).

An N-terminal signal peptide occupies residues 1–20 (MRAIISLLLISAMVFSMIAA). Residues 21 to 34 (VPEEEGLQLSEDER) constitute a propeptide that is removed on maturation. Disulfide bonds link Cys-37–Cys-53, Cys-44–Cys-58, and Cys-52–Cys-68. Leu-69 is modified (leucine amide).

The protein belongs to the neurotoxin 01 (U2-agtx) family. Expressed by the venom gland.

It is found in the secreted. In terms of biological role, insect active toxin causing rapid but reversible paralysis in crickets. No activity shown in mammals. Does not show effect on mammalian voltage-gated calcium channels. The protein is U2-agatoxin-Ao1j of Agelena orientalis (Funnel-web spider).